A 138-amino-acid chain; its full sequence is 1,4-dihydroxy-2-naphthoyl-CoA hydrolase (138 aa).

Residue Asp-16 is part of the active site.

Belongs to the 4-hydroxybenzoyl-CoA thioesterase family. DHNA-CoA hydrolase subfamily.

The catalysed reaction is 1,4-dihydroxy-2-naphthoyl-CoA + H2O = 1,4-dihydroxy-2-naphthoate + CoA + H(+). It participates in cofactor biosynthesis; phylloquinone biosynthesis. It functions in the pathway quinol/quinone metabolism; 1,4-dihydroxy-2-naphthoate biosynthesis; 1,4-dihydroxy-2-naphthoate from chorismate: step 7/7. Catalyzes the specific hydrolysis of 1,4-dihydroxy-2-naphthoyl-CoA (DHNA-CoA) to 1,4-dihydroxy-2-naphthoate (DHNA), a reaction involved in phylloquinone (vitamin K1) biosynthesis. Is not active on benzoyl-CoA, phenylacetyl-CoA and aliphatic acyl-CoA thioesters. This chain is 1,4-dihydroxy-2-naphthoyl-CoA hydrolase, found in Synechocystis sp. (strain ATCC 27184 / PCC 6803 / Kazusa).